Here is a 552-residue protein sequence, read N- to C-terminus: HTH-type transcriptional regulator SgrR (552 aa).

The region spanning 1 to 116 (MPSARLQQQF…LVSHLGRSFR (116 aa)) is the HTH marR-type domain. The segment at residues 26–49 (LNELAALLSCSRRHMRTLLNTMQD) is a DNA-binding region (H-T-H motif). Residues 163 to 492 (ELEADIAHHW…IDWQVDAARW (330 aa)) are solute-binding.

In terms of biological role, activates the small RNA gene sgrS under glucose-phosphate stress conditions as well as yfdZ. Represses its own transcription under both stress and non-stress conditions. Might act as a sensor of the intracellular accumulation of phosphoglucose by binding these molecules in its C-terminal solute-binding domain. The protein is HTH-type transcriptional regulator SgrR of Escherichia coli O157:H7.